We begin with the raw amino-acid sequence, 724 residues long: Phenylalanine ammonia-lyase (724 aa).

Y99 functions as the Proton donor/acceptor in the catalytic mechanism. The 5-imidazolinone (Ala-Gly) cross-link spans 204–206 (ASG). At S205 the chain carries 2,3-didehydroalanine (Ser). 7 residues coordinate (E)-cinnamate: N265, Q355, R361, N391, K462, E490, and N493.

It belongs to the PAL/histidase family. As to quaternary structure, homotetramer. In terms of processing, contains an active site 4-methylidene-imidazol-5-one (MIO), which is formed autocatalytically by cyclization and dehydration of residues Ala-Ser-Gly.

It localises to the cytoplasm. The catalysed reaction is L-phenylalanine = (E)-cinnamate + NH4(+). It participates in phenylpropanoid metabolism; trans-cinnamate biosynthesis; trans-cinnamate from L-phenylalanine: step 1/1. In terms of biological role, catalyzes the non-oxidative deamination of L-phenylalanine to form trans-cinnamic acid and a free ammonium ion. Facilitates the commitment step in phenylpropanoid pathways that produce secondary metabolites such as lignins, coumarins and flavonoids. This chain is Phenylalanine ammonia-lyase, found in Flammulina velutipes (Agaricus velutipes).